The following is a 169-amino-acid chain: Ribosome maturation factor RimP (169 aa).

This sequence belongs to the RimP family.

The protein localises to the cytoplasm. Its function is as follows. Required for maturation of 30S ribosomal subunits. This is Ribosome maturation factor RimP from Pseudomonas putida (strain ATCC 700007 / DSM 6899 / JCM 31910 / BCRC 17059 / LMG 24140 / F1).